Here is a 97-residue protein sequence, read N- to C-terminus: Late embryogenesis abundant protein Lea5 (97 aa).

The protein belongs to the LEA type 3 family.

The chain is Late embryogenesis abundant protein Lea5 (LEA5) from Citrus sinensis (Sweet orange).